The following is a 369-amino-acid chain: Small RNA 2'-O-methyltransferase (369 aa).

Residues Ser-39, Asp-57, and Ser-93 each contribute to the S-adenosyl-L-methionine site. Mg(2+) is bound by residues Glu-111, Glu-114, His-115, and His-161.

Belongs to the methyltransferase superfamily. HEN1 family. It depends on Mg(2+) as a cofactor.

The protein resides in the cytoplasm. The catalysed reaction is small RNA 3'-end nucleotide + S-adenosyl-L-methionine = small RNA 3'-end 2'-O-methylnucleotide + S-adenosyl-L-homocysteine + H(+). Its function is as follows. Methyltransferase that adds a 2'-O-methyl group at the 3'-end of piRNAs, a class of 24 to 30 nucleotide RNAs that are generated by a Dicer-independent mechanism and are primarily derived from transposons and other repeated sequence elements. This probably protects the 3'-end of piRNAs from uridylation activity and subsequent degradation. Stabilization of piRNAs is essential for gametogenesis. This chain is Small RNA 2'-O-methyltransferase (henmt1), found in Xenopus tropicalis (Western clawed frog).